Here is a 232-residue protein sequence, read N- to C-terminus: 2-C-methyl-D-erythritol 4-phosphate cytidylyltransferase (232 aa).

It belongs to the IspD/TarI cytidylyltransferase family. IspD subfamily.

The catalysed reaction is 2-C-methyl-D-erythritol 4-phosphate + CTP + H(+) = 4-CDP-2-C-methyl-D-erythritol + diphosphate. It participates in isoprenoid biosynthesis; isopentenyl diphosphate biosynthesis via DXP pathway; isopentenyl diphosphate from 1-deoxy-D-xylulose 5-phosphate: step 2/6. Catalyzes the formation of 4-diphosphocytidyl-2-C-methyl-D-erythritol from CTP and 2-C-methyl-D-erythritol 4-phosphate (MEP). This Stenotrophomonas maltophilia (strain K279a) protein is 2-C-methyl-D-erythritol 4-phosphate cytidylyltransferase.